Consider the following 373-residue polypeptide: MPPRAWYLAAGFVIMCFNSLYQYTWNLLAPMIGRAMGLGVLAEAVGFTIYVIVSTVAQPAGGALADLRGPRGVGALSAVLSALGFIGAALAPGPALLYLAWGLGSAGEGVLYGIAFNLAVKWYQDKLGLATGLVSLGFGLGSAVANPLIASVGNYREATLAIGVVELLVLVPLSLLVDYPRGLSGVSPRRALLDARFWTLYASYALGAVPLLSLASSLHLLVGGGELVLLASLYPLLVGAARPLLGALADKWGPLKAIYLALAVSAAGTLAMLAGLDIVGVIAVGLTGGAIIILYLNLSSRIFGPKYATANNGLLYTAKAVGGTLGSAAFGYVYALGGARASLLFAAASALAAMAILAAQRGLERPLPRDPQL.

This is an uncharacterized protein from Thermoproteus tenax.